A 273-amino-acid polypeptide reads, in one-letter code: Manganese catalase (273 aa).

Residue E35 participates in Mn(2+) binding. Ca(2+)-binding residues include D57 and D61. E66, H69, E149, and H182 together coordinate Mn(2+). Ca(2+) is bound by residues N220, S222, and G224. Residues 254 to 273 are disordered; the sequence is EKPELKPAPPCVHNTLPGRE.

It belongs to the manganese catalase family. As to quaternary structure, homohexamer. Ca(2+) is required as a cofactor. It depends on Mn(2+) as a cofactor.

The enzyme catalyses 2 H2O2 = O2 + 2 H2O. Inhibited in the presence of EDTA. Resistant to inhibition by sodium azide. Functionally, catalyzes the decomposition of hydrogen peroxide into water and oxygen. No significant activity could be detected with any of the other tested substrates, including glutathione, pyrogallol, NADH, NADPH and o-dianisidine. This is Manganese catalase from Bacillus subtilis.